The chain runs to 1930 residues: Ankyrin repeat domain-containing protein SAT10 (1930 aa).

ANK repeat units lie at residues 840–872 (FRHT…DLEE), 878–908 (GTWN…GVLN), 920–949 (SGNT…MRGY), 959–989 (QRSS…DYSK), 993–1023 (NGAS…FSNE), 1073–1102 (SGLT…DANG), 1106–1135 (EFEA…TKTE), 1144–1174 (GRTR…QLSH), 1178–1205 (NQRT…ETET), 1206–1235 (GLQE…EINA), 1239–1268 (YGNT…RLDL), 1272–1301 (DNVN…DVNA), 1304–1333 (GGDT…KFIL), 1339–1368 (RFEN…ERDL), 1400–1429 (SGWT…GRAA), 1514–1543 (QNML…SLTP), 1548–1577 (RHGT…MLAD), 1615–1644 (MGRN…NEDL), 1651–1680 (DGWT…KIFD), and 1696–1724 (KTWT…TTSD).

Its pathway is mycotoxin biosynthesis. Functionally, ankyrin repeat domain-containing protein; part of the satratoxin SC1 cluster involved in the biosynthesis of satratoxins, trichothecene mycotoxins that are associated with human food poisonings. Satratoxins are suggested to be made by products of multiple gene clusters (SC1, SC2 and SC3) that encode 21 proteins in all, including polyketide synthases, acetyltransferases, and other enzymes expected to modify the trichothecene skeleton. SC1 encodes 10 proteins, SAT1 to SAT10. The largest are SAT8, which encodes a putative polyketide synthase (PKS) with a conventional non-reducing architecture, and SAT10, a putative protein containing four ankyrin repeats and thus may be involved in protein scaffolding. The putative short-chain reductase SAT3 may assist the PKS in some capacity. SAT6 contains a secretory lipase domain and acts probably as a trichothecene esterase. SAT5 encodes a putative acetyltransferase, and so, with SAT6, may affect endogenous protection from toxicity. The probable transcription factor SAT9 may regulate the expression of the SC1 cluster. SC2 encodes proteins SAT11 to SAT16, the largest of which encodes the putative reducing PKS SAT13. SAT11 is a cytochrome P450 monooxygenase, while SAT14 and SAT16 are probable acetyltransferases. The SC2 cluster may be regulated by the transcription factor SAT15. SC3 is a small cluster that encodes 5 proteins, SAT17 to SAT21. SAT21 is a putative MFS-type transporter which may have a role in exporting secondary metabolites. The four other proteins putatively encoded in SC3 include the taurine hydroxylase-like protein SAT17, the O-methyltransferase SAT18, the acetyltransferase SAT19, and the Cys6-type zinc finger SAT20, the latter being probably involved in regulation of SC3 expression. This Stachybotrys chartarum (strain CBS 109288 / IBT 7711) (Toxic black mold) protein is Ankyrin repeat domain-containing protein SAT10.